A 787-amino-acid chain; its full sequence is Zinc finger protein 227 (787 aa).

One can recognise a KRAB domain in the interval 23-94; that stretch reads VTFKDVAVVF…ERETQRNGHS (72 aa). 18 C2H2-type zinc fingers span residues 243-275, 312-334, 340-362, 368-390, 396-418, 424-446, 452-474, 480-502, 508-530, 536-558, 564-586, 592-614, 620-642, 648-670, 676-698, 704-726, 732-754, and 760-782; these read HPCR…LQTH, YRCD…YRTH, YRCE…QRVH, YKCE…QRVH, YKCD…RRVH, YRCE…FRVH, YTCK…QNVH, FKCE…QRVH, YRCD…QVIH, YTCE…QRVH, YKCG…QRVH, YKCD…QRGH, HKCE…LSVH, and YKCN…QKVH.

This sequence belongs to the krueppel C2H2-type zinc-finger protein family.

Its subcellular location is the nucleus. Its function is as follows. May be involved in transcriptional regulation. The sequence is that of Zinc finger protein 227 (ZNF227) from Bos taurus (Bovine).